The primary structure comprises 258 residues: Type III pantothenate kinase (258 aa).

An ATP-binding site is contributed by 6-13; that stretch reads DVGNTNIV. Substrate-binding positions include Y100 and 107-110; that span reads GADR. D109 acts as the Proton acceptor in catalysis. D129 provides a ligand contact to K(+). An ATP-binding site is contributed by T132. Substrate is bound at residue T184.

Belongs to the type III pantothenate kinase family. As to quaternary structure, homodimer. It depends on NH4(+) as a cofactor. K(+) is required as a cofactor.

The protein localises to the cytoplasm. It carries out the reaction (R)-pantothenate + ATP = (R)-4'-phosphopantothenate + ADP + H(+). Its pathway is cofactor biosynthesis; coenzyme A biosynthesis; CoA from (R)-pantothenate: step 1/5. In terms of biological role, catalyzes the phosphorylation of pantothenate (Pan), the first step in CoA biosynthesis. This Clostridium botulinum (strain Kyoto / Type A2) protein is Type III pantothenate kinase.